Here is a 384-residue protein sequence, read N- to C-terminus: PqqA peptide cyclase (384 aa).

One can recognise a Radical SAM core domain in the interval 14–226 (IPAPVGLLAE…IRIVEAARER (213 aa)). [4Fe-4S] cluster is bound by residues Cys28, Cys32, and Cys35.

This sequence belongs to the radical SAM superfamily. PqqE family. Interacts with PqqD. The interaction is necessary for activity of PqqE. The cofactor is [4Fe-4S] cluster.

It catalyses the reaction [PQQ precursor protein] + S-adenosyl-L-methionine = E-Y cross-linked-[PQQ precursor protein] + 5'-deoxyadenosine + L-methionine + H(+). Its pathway is cofactor biosynthesis; pyrroloquinoline quinone biosynthesis. Its function is as follows. Catalyzes the cross-linking of a glutamate residue and a tyrosine residue in the PqqA protein as part of the biosynthesis of pyrroloquinoline quinone (PQQ). In Methylorubrum populi (strain ATCC BAA-705 / NCIMB 13946 / BJ001) (Methylobacterium populi), this protein is PqqA peptide cyclase.